The sequence spans 510 residues: ARVKSENLLKKPVVKWFKGKWMDLGTKVGKHLQLQETYDRNTKIYTFEIHIIKAKTTYAGGYRCEAVSKDKFDSCNFNLNMHEASNAGEVDIRSAFRRTGDGKEEAGELDFSALLKKRDSFLLCESRQMKAEGHPRLMSGKSEGASPSEYEKIAFQYGITDLRGLLKRLKKMKKEEKKSTAFLKKLDPAYQVDKGQKIKLVVEVANPDAEVKWKKNGQDIKSSRTKYIFESIGNKRILTINHCSLADDAAYECVIGDEKCFTELFVKEPPYSSHAPLEDQMVMVGERVEFECEVSEEGAQVKWEKDGAELTREETFNYRFKKDGWQETYLLINEPTKEDSGHYTVKTNGWESVANLWVQEKSVLEVLQEVADLTVMARDQAVFKCEVSDENVKGVWVKNGKEVVPNDRITIRHIGRTHKLTIDNVVVAEDEGDYSFIPDGFAFNLSAKLKFLEIKIDFVPRQEPPKINLDVMGPAADTIVVVAGNKLRLDVPISGTPAPTVIWTKGNKVG.

Ig-like C2-type domains lie at 177–269, 270–347, and 378–438; these read KKST…VKEP, PYSS…TVKT, and RDQA…SFIP.

It belongs to the immunoglobulin superfamily. MyBP family. As to expression, heart.

Its function is as follows. Thick filament-associated protein located in the crossbridge region of vertebrate striated muscle a bands. In vitro it binds MHC, F-actin and native thin filaments, and modifies the activity of actin-activated myosin ATPase. It may modulate muscle contraction or may play a more structural role. This Ambystoma mexicanum (Axolotl) protein is Myosin-binding protein C, cardiac-type.